A 581-amino-acid chain; its full sequence is Arginine--tRNA ligase (581 aa).

A 'HIGH' region motif is present at residues 122 to 132; sequence PNVAKPMHVGH.

This sequence belongs to the class-I aminoacyl-tRNA synthetase family. Monomer.

The protein resides in the cytoplasm. It carries out the reaction tRNA(Arg) + L-arginine + ATP = L-arginyl-tRNA(Arg) + AMP + diphosphate. This chain is Arginine--tRNA ligase, found in Francisella tularensis subsp. tularensis (strain FSC 198).